The following is a 745-amino-acid chain: Copper-exporting P-type ATPase B (745 aa).

Positions 1–76 (MNNGIDPENE…GMDHSHMDHE (76 aa)) are disordered. Over 1-108 (MNNGIDPENE…HMGNFKQKFW (108 aa)) the chain is Cytoplasmic. A compositionally biased stretch (basic and acidic residues) spans 36 to 76 (LQEHGKMENMDQHHTHGHMERHQQMDHGHMSGMDHSHMDHE). 3 repeat units span residues 60–71 (MDHGHMSGMDHS), 73–84 (MDHEDMSGMNHS), and 86–97 (MGHENMSGMDHS). A 3 X 12 AA approximate repeats region spans residues 60–97 (MDHGHMSGMDHSHMDHEDMSGMNHSHMGHENMSGMDHS). The chain crosses the membrane as a helical span at residues 109–128 (LSLILAIPIILFSPMMGMSF). Topologically, residues 129-139 (PFQVTFPGSNW) are extracellular. Residues 140–160 (VVLVLATILFIYGGQPFLSGA) traverse the membrane as a helical segment. Residues 161 to 170 (KMELKQKSPA) are Cytoplasmic-facing. The helical transmembrane segment at 171–191 (MMTLIAMGITVAYVYSVYSFI) threads the bilayer. The Extracellular segment spans residues 192-200 (ANLINPHTH). The helical transmembrane segment at 201–217 (VMDFFWELATLIVIMLL) threads the bilayer. Residues 218–359 (GHWIEMNAVS…EFLSDKVAKW (142 aa)) lie on the Cytoplasmic side of the membrane. Residues 360 to 379 (LFYVALVVGIIAFIAWLFLA) traverse the membrane as a helical segment. Over 380 to 388 (NLPDALERM) the chain is Extracellular. The chain crosses the membrane as a helical span at residues 389–409 (VTVFIIACPHALGLAIPLVVA). The Cytoplasmic portion of the chain corresponds to 410–703 (RSTSIAAKNG…QNLWWGAGYN (294 aa)). The active-site 4-aspartylphosphate intermediate is Asp-440. Positions 638 and 642 each coordinate Mg(2+). Residues 704–721 (IIAIPLAAGILAPIGLIL) form a helical membrane-spanning segment. Residues 722–723 (SP) lie on the Extracellular side of the membrane. Residues 724–744 (AVGAVLMSLSTVVVALNALTL) form a helical membrane-spanning segment. A topological domain (cytoplasmic) is located at residue Lys-745.

Belongs to the cation transport ATPase (P-type) (TC 3.A.3) family. Type IB subfamily. In terms of assembly, monomer.

It localises to the cell membrane. It carries out the reaction Cu(+)(in) + ATP + H2O = Cu(+)(out) + ADP + phosphate + H(+). With respect to regulation, inhibited by vanadate. Functionally, involved in copper export. Can also export silver. The chain is Copper-exporting P-type ATPase B (copB) from Enterococcus hirae (strain ATCC 9790 / DSM 20160 / JCM 8729 / LMG 6399 / NBRC 3181 / NCIMB 6459 / NCDO 1258 / NCTC 12367 / WDCM 00089 / R).